A 148-amino-acid polypeptide reads, in one-letter code: Glutamyl-tRNA(Gln) amidotransferase subunit C, mitochondrial (148 aa).

It belongs to the GatC family. Subunit of the heterotrimeric GatCAB amidotransferase (AdT) complex, composed of A, B and C subunits.

It localises to the mitochondrion. It carries out the reaction L-glutamyl-tRNA(Gln) + L-glutamine + ATP + H2O = L-glutaminyl-tRNA(Gln) + L-glutamate + ADP + phosphate + H(+). Functionally, allows the formation of correctly charged Gln-tRNA(Gln) through the transamidation of misacylated Glu-tRNA(Gln) in the mitochondria. The reaction takes place in the presence of glutamine and ATP through an activated gamma-phospho-Glu-tRNA(Gln). The sequence is that of Glutamyl-tRNA(Gln) amidotransferase subunit C, mitochondrial from Drosophila melanogaster (Fruit fly).